The sequence spans 221 residues: Eukaryotic translation initiation factor 3 subunit K (221 aa).

Residues 46 to 207 (YDLEANLACL…NIKTKHITEK (162 aa)) enclose the PCI domain.

It belongs to the eIF-3 subunit K family. As to quaternary structure, component of the eukaryotic translation initiation factor 3 (eIF-3) complex.

The protein localises to the cytoplasm. In terms of biological role, component of the eukaryotic translation initiation factor 3 (eIF-3) complex, which is involved in protein synthesis of a specialized repertoire of mRNAs and, together with other initiation factors, stimulates binding of mRNA and methionyl-tRNAi to the 40S ribosome. The eIF-3 complex specifically targets and initiates translation of a subset of mRNAs involved in cell proliferation. This Aedes aegypti (Yellowfever mosquito) protein is Eukaryotic translation initiation factor 3 subunit K.